We begin with the raw amino-acid sequence, 297 residues long: Mycothiol acetyltransferase (297 aa).

N-acetyltransferase domains are found at residues 7-156 (VFSD…VTIR) and 153-297 (VTIR…PPPH). E38 lines the 1D-myo-inositol 2-(L-cysteinylamino)-2-deoxy-alpha-D-glucopyranoside pocket. Residue 79 to 81 (VVV) coordinates acetyl-CoA. E180, K219, and E227 together coordinate 1D-myo-inositol 2-(L-cysteinylamino)-2-deoxy-alpha-D-glucopyranoside. Acetyl-CoA is bound by residues 231-233 (VGV) and 238-244 (QGLGLGR). Y265 is a binding site for 1D-myo-inositol 2-(L-cysteinylamino)-2-deoxy-alpha-D-glucopyranoside. Position 270–275 (270–275 (NRPALR)) interacts with acetyl-CoA.

It belongs to the acetyltransferase family. MshD subfamily. Monomer.

The enzyme catalyses 1D-myo-inositol 2-(L-cysteinylamino)-2-deoxy-alpha-D-glucopyranoside + acetyl-CoA = mycothiol + CoA + H(+). Functionally, catalyzes the transfer of acetyl from acetyl-CoA to desacetylmycothiol (Cys-GlcN-Ins) to form mycothiol. The sequence is that of Mycothiol acetyltransferase from Thermomonospora curvata (strain ATCC 19995 / DSM 43183 / JCM 3096 / KCTC 9072 / NBRC 15933 / NCIMB 10081 / Henssen B9).